Here is a 644-residue protein sequence, read N- to C-terminus: Macrolide export ATP-binding/permease protein MacB (644 aa).

Residues isoleucine 7–arginine 245 enclose the ABC transporter domain. Glycine 43–serine 50 is a binding site for ATP. 4 consecutive transmembrane segments (helical) span residues alanine 271 to glycine 291, isoleucine 526 to valine 546, phenylalanine 570 to isoleucine 590, and leucine 607 to leucine 627.

Belongs to the ABC transporter superfamily. Macrolide exporter (TC 3.A.1.122) family. In terms of assembly, homodimer. Part of the tripartite efflux system MacAB-TolC, which is composed of an inner membrane transporter, MacB, a periplasmic membrane fusion protein, MacA, and an outer membrane component, TolC. The complex forms a large protein conduit and can translocate molecules across both the inner and outer membranes. Interacts with MacA.

The protein localises to the cell inner membrane. Functionally, part of the tripartite efflux system MacAB-TolC. MacB is a non-canonical ABC transporter that contains transmembrane domains (TMD), which form a pore in the inner membrane, and an ATP-binding domain (NBD), which is responsible for energy generation. Confers resistance against macrolides. This Marinobacter nauticus (strain ATCC 700491 / DSM 11845 / VT8) (Marinobacter aquaeolei) protein is Macrolide export ATP-binding/permease protein MacB.